Here is a 283-residue protein sequence, read N- to C-terminus: Pantothenate synthetase (283 aa).

Residue 31–38 coordinates ATP; sequence MGALHDGH. Histidine 38 functions as the Proton donor in the catalytic mechanism. Glutamine 62 serves as a coordination point for (R)-pantoate. Glutamine 62 contributes to the beta-alanine binding site. 148-151 contacts ATP; the sequence is GKKD. Glutamine 154 lines the (R)-pantoate pocket. Residues valine 177 and 185 to 188 each bind ATP; that span reads KSSR.

The protein belongs to the pantothenate synthetase family. As to quaternary structure, homodimer.

The protein localises to the cytoplasm. It catalyses the reaction (R)-pantoate + beta-alanine + ATP = (R)-pantothenate + AMP + diphosphate + H(+). Its pathway is cofactor biosynthesis; (R)-pantothenate biosynthesis; (R)-pantothenate from (R)-pantoate and beta-alanine: step 1/1. Its function is as follows. Catalyzes the condensation of pantoate with beta-alanine in an ATP-dependent reaction via a pantoyl-adenylate intermediate. In Staphylococcus aureus (strain bovine RF122 / ET3-1), this protein is Pantothenate synthetase.